The following is a 369-amino-acid chain: Ferrochelatase (369 aa).

Positions 210 and 291 each coordinate Fe cation.

Belongs to the ferrochelatase family.

It is found in the cytoplasm. It catalyses the reaction heme b + 2 H(+) = protoporphyrin IX + Fe(2+). It functions in the pathway porphyrin-containing compound metabolism; protoheme biosynthesis; protoheme from protoporphyrin-IX: step 1/1. In terms of biological role, catalyzes the ferrous insertion into protoporphyrin IX. This is Ferrochelatase from Thioalkalivibrio sulfidiphilus (strain HL-EbGR7).